Consider the following 178-residue polypeptide: Heavy metal-associated isoprenylated plant protein 30 (178 aa).

Residues 45 to 108 form the HMA domain; sequence LQTIDLKVRM…AVRRAGKRAE (64 aa). Residues cysteine 56 and cysteine 59 each contribute to the a metal cation site. Cysteine 175 carries the cysteine methyl ester modification. Residue cysteine 175 is the site of S-farnesyl cysteine attachment. A propeptide spans 176–178 (removed in mature form); the sequence is SLM.

Belongs to the HIPP family. Interacts with ZHD3/HB21, ZHD11/HB29 and ZHD8/HB30.

In terms of biological role, heavy-metal-binding protein. The chain is Heavy metal-associated isoprenylated plant protein 30 from Arabidopsis thaliana (Mouse-ear cress).